A 515-amino-acid chain; its full sequence is GMP synthase [glutamine-hydrolyzing] (515 aa).

The Glutamine amidotransferase type-1 domain occupies 10–200 (TIIVLDFGSQ…VFGVCGCSEG (191 aa)). The Nucleophile role is filled by C87. Active-site residues include H174 and E176. The region spanning 201-390 (WNMENFIEVE…LGIPDEIVWR (190 aa)) is the GMPS ATP-PPase domain. 228-234 (SGGVDSS) lines the ATP pocket.

As to quaternary structure, homodimer.

The enzyme catalyses XMP + L-glutamine + ATP + H2O = GMP + L-glutamate + AMP + diphosphate + 2 H(+). Its pathway is purine metabolism; GMP biosynthesis; GMP from XMP (L-Gln route): step 1/1. Catalyzes the synthesis of GMP from XMP. This chain is GMP synthase [glutamine-hydrolyzing], found in Bacillus thuringiensis subsp. konkukian (strain 97-27).